The following is a 271-amino-acid chain: Intercellular adhesion molecule 4 (271 aa).

The N-terminal stretch at 1–22 is a signal peptide; that stretch reads MGSLFPLSLLFFLAAAYPGVGS. The Extracellular segment spans residues 23-240; sequence ALGRRTKRAQ…MLAWSPAPTA (218 aa). Ig-like C2-type domains follow at residues 62 to 124 and 146 to 217; these read GKSV…TRWA and GRKY…LNLD. N68, N78, N190, and N223 each carry an N-linked (GlcNAc...) asparagine glycan. 4 disulfide bridges follow: C69/C113, C69/C117, C73/C117, and C153/C210. A helical membrane pass occupies residues 241–261; it reads LASGSIAALVGILLTVGAAYL. Residues 262 to 271 lie on the Cytoplasmic side of the membrane; that stretch reads CKCLAMKSQA.

Belongs to the immunoglobulin superfamily. ICAM family. Post-translationally, N- and O-glycosylated. As to expression, erythrocytes.

It is found in the cell membrane. Its subcellular location is the secreted. In terms of biological role, ICAM proteins are ligands for the leukocyte adhesion protein LFA-1 (integrin alpha-L/beta-2). ICAM4 is also a ligand for alpha-4/beta-1 and alpha-V integrins. The chain is Intercellular adhesion molecule 4 (ICAM4) from Homo sapiens (Human).